Consider the following 497-residue polypeptide: MGESVKAIKLKILDMFLDPECTKQDDNWRKDLSTMSRFCAEAGNMCLRDLYNYFSMPKEDRISSKDLYNAMYHKTKLLHPELPGKVANQIVNHAKDVWKRNAKLIYRNQISMPTYKITTAPIRLQNNIYKLIKNKNKYIIDVQLYSKEYSKDSGKGTHRYFLVAVRDSSTRMIFDRIMSKDHIDSSKSYTQGQLQIKKDHQGKWYCIIPYTFPTHETVLDPDKVMGVDLGVAKAVYWAFNSSYKRGCIDGGEIEHFRKMIRARRVSIQNQIKHSGDARKGHGRKRALKPIETLSEKEKNFRDTINHRYANRIVEAAIKQGCGTIQIENLEGIADTTGSKFLKNWPYYDLQTKIVNKAKEHGITVVAINPQYTSQRCSMCGYIEKTNRSSQAVFECKQCGYGSRTICINCRHVQVSGDVCEECGGIVKKENVNADYNAAKNISTPYIDQIIMEKCLELGIPYRSITCKECGHIQASGNTCEVCGSTNILKPKKIRKAK.

The segment at 29 to 122 (RKDLSTMSRF…PTYKITTAPI (94 aa)) is recognition domain (REC). Residues 123–214 (RLQNNIYKLI…YCIIPYTFPT (92 aa)) are wedge domain (WED). The tract at residues 215–223 (HETVLDPDK) is linker. The ruvC-I stretch occupies residues 224-374 (VMGVDLGVAK…VAINPQYTSQ (151 aa)). Residues Asp-228 and Glu-327 contribute to the active site. The segment at 375–432 (RCSMCGYIEKTNRSSQAVFECKQCGYGSRTICINCRHVQVSGDVCEECGGIVKKENVN) is target nucleic acid-binding (TNB). Residues Cys-376, Cys-379, Cys-395, and Cys-398 each coordinate Zn(2+). A ruvC-II region spans residues 433-453 (ADYNAAKNISTPYIDQIIMEK). The active site involves Asp-434.

It belongs to the CRISPR-associated endonuclease Cas12f family. An asymmetric homodimer. Guide RNA is probably required for dimerization. The cofactor is Mg(2+). Zn(2+) serves as cofactor.

Its function is as follows. CRISPR (clustered regularly interspaced short palindromic repeat), is an adaptive immune system that provides protection against mobile genetic elements (viruses, transposable elements and conjugative plasmids). CRISPR clusters contain sequences complementary to antecedent mobile elements and target invading nucleic acids. CRISPR clusters are transcribed and processed into CRISPR RNA (crRNA), which requires a trans-encoded small RNA (tracrRNA), but not this protein. Recognizes a short motif in the CRISPR repeat sequences (the 5' PAM or protospacer adjacent motif, TTC in this organism) to help distinguish self versus nonself, as targets within the CRISPR locus do not have PAMs. Has dsDNA endonuclease activity upon expression in E.coli of this protein, a mini CRISPR array and the probable tracrRNA. Plasmid cleavage is centered around positions 24 base pairs 3' of PAM. The mini system protects E.coli against transformation by foreign plasmids. This is CRISPR-associated endodeoxyribonuclease Cas12f1 from Syntrophomonas palmitatica (strain DSM 18709 / JCM 14374 / NBRC 102128 / MPA).